We begin with the raw amino-acid sequence, 463 residues long: Chaperone SurA (463 aa).

Residues 1–25 (MTKPFSVVLASLLAITSTISPLASA) form the signal peptide. 2 PpiC domains span residues 174–276 (GSKY…KLME) and 289–388 (VTEY…QRVG). Disordered regions lie at residues 329 to 348 (ATAKESSEDTNSRGQGGDLG) and 434 to 463 (GDRADNNATAAPAKSADPALPAPPPAKPTR). Low complexity predominate over residues 439-452 (NNATAAPAKSADPA). Positions 453 to 463 (LPAPPPAKPTR) are enriched in pro residues.

Its subcellular location is the periplasm. It carries out the reaction [protein]-peptidylproline (omega=180) = [protein]-peptidylproline (omega=0). In terms of biological role, chaperone involved in the correct folding and assembly of outer membrane proteins. Recognizes specific patterns of aromatic residues and the orientation of their side chains, which are found more frequently in integral outer membrane proteins. May act in both early periplasmic and late outer membrane-associated steps of protein maturation. In Xanthomonas oryzae pv. oryzae (strain MAFF 311018), this protein is Chaperone SurA.